The sequence spans 692 residues: uncharacterized protein (692 aa).

Response regulatory domains follow at residues 9-130 (RVLY…LRMC) and 139-255 (RILI…EYRM). Asp-58 and Asp-188 each carry 4-aspartylphosphate. In terms of domain architecture, GGDEF spans 299–432 (GVHGLVIIDV…GGNQAHVWSA (134 aa)). The EAL domain maps to 443–691 (ESVIKRLVST…SFDFQHMSHD (249 aa)).

This is an uncharacterized protein from Thiocystis violacea.